The primary structure comprises 213 residues: NADH-quinone oxidoreductase subunit I (213 aa).

4Fe-4S ferredoxin-type domains follow at residues 74–103 (RFIESENERCIGCGLCEKICISNCIRMETS) and 113–142 (GNYSINLGRCIYCGFCAEVCPELAIVHGTE). [4Fe-4S] cluster is bound by residues Cys-83, Cys-86, Cys-89, Cys-93, Cys-122, Cys-125, Cys-128, and Cys-132.

The protein belongs to the complex I 23 kDa subunit family. As to quaternary structure, NDH-1 is composed of 14 different subunits. Subunits NuoA, H, J, K, L, M, N constitute the membrane sector of the complex. [4Fe-4S] cluster serves as cofactor.

It localises to the cell inner membrane. The catalysed reaction is a quinone + NADH + 5 H(+)(in) = a quinol + NAD(+) + 4 H(+)(out). Functionally, NDH-1 shuttles electrons from NADH, via FMN and iron-sulfur (Fe-S) centers, to quinones in the respiratory chain. The immediate electron acceptor for the enzyme in this species is believed to be ubiquinone. Couples the redox reaction to proton translocation (for every two electrons transferred, four hydrogen ions are translocated across the cytoplasmic membrane), and thus conserves the redox energy in a proton gradient. The chain is NADH-quinone oxidoreductase subunit I from Campylobacter jejuni subsp. jejuni serotype O:6 (strain 81116 / NCTC 11828).